We begin with the raw amino-acid sequence, 364 residues long: tRNA 2-selenouridine synthase (364 aa).

Residues 14-137 form the Rhodanese domain; sequence LIADTPIIDV…LRQTAIQATI (124 aa). The active-site S-selanylcysteine intermediate is C97.

It belongs to the SelU family. In terms of assembly, monomer.

It carries out the reaction 5-methylaminomethyl-2-thiouridine(34) in tRNA + selenophosphate + (2E)-geranyl diphosphate + H2O + H(+) = 5-methylaminomethyl-2-selenouridine(34) in tRNA + (2E)-thiogeraniol + phosphate + diphosphate. The catalysed reaction is 5-methylaminomethyl-2-thiouridine(34) in tRNA + (2E)-geranyl diphosphate = 5-methylaminomethyl-S-(2E)-geranyl-thiouridine(34) in tRNA + diphosphate. It catalyses the reaction 5-methylaminomethyl-S-(2E)-geranyl-thiouridine(34) in tRNA + selenophosphate + H(+) = 5-methylaminomethyl-2-(Se-phospho)selenouridine(34) in tRNA + (2E)-thiogeraniol. The enzyme catalyses 5-methylaminomethyl-2-(Se-phospho)selenouridine(34) in tRNA + H2O = 5-methylaminomethyl-2-selenouridine(34) in tRNA + phosphate. Functionally, involved in the post-transcriptional modification of the uridine at the wobble position (U34) of tRNA(Lys), tRNA(Glu) and tRNA(Gln). Catalyzes the conversion of 2-thiouridine (S2U-RNA) to 2-selenouridine (Se2U-RNA). Acts in a two-step process involving geranylation of 2-thiouridine (S2U) to S-geranyl-2-thiouridine (geS2U) and subsequent selenation of the latter derivative to 2-selenouridine (Se2U) in the tRNA chain. This chain is tRNA 2-selenouridine synthase, found in Shigella dysenteriae serotype 1 (strain Sd197).